The chain runs to 125 residues: Putative zinc finger A20 and AN1 domain-containing stress-associated protein 8 (125 aa).

The A20-type zinc finger occupies 2 to 36 (TGEPSLCIRGCGFFSTSQTKNLCSKCYNDFLKDES). 8 residues coordinate Zn(2+): cysteine 8, cysteine 12, cysteine 24, cysteine 27, cysteine 80, cysteine 82, histidine 96, and cysteine 98. Residues 61–106 (LGSKGGCACKKKVGLLGFHCRCGHLFFASHRYPEEHSCPSDYKSAA) form an AN1-type; degenerate zinc finger.

Functionally, may be involved in environmental stress response. The chain is Putative zinc finger A20 and AN1 domain-containing stress-associated protein 8 (SAP8) from Arabidopsis thaliana (Mouse-ear cress).